The following is a 341-amino-acid chain: MILLENVKKIYKAKSGDVTAVDNANLKIDKGEIFGVIGYSGAGKSSLIRLFNQLEKPTSGQITIANRVISAITGSELRKARQEIGMIFQHFNLLWSRTVRENIEFPLEIAGVDKAKRRKRVDELIHLVGLEGRGDAYPSQLSGGQKQRVGIARALANNPQVLLCDEATSALDPETTDQILDLLLDINKRLGLTIVLITHEMHVIRKICNRVAVMEKGKIVETGPVLDVFRNPQQDITKRFVQQLTDSEDTNETIESLIEKYPDGKVVRLQFIGEAVERPVLQRLMQRSDIEVSILQGNIAQTNNGSYGSLVVHLNGEETAIQQAIEGIHQDQVELEVIAHG.

One can recognise an ABC transporter domain in the interval 2–241 (ILLENVKKIY…PQQDITKRFV (240 aa)). 38–45 (GYSGAGKS) serves as a coordination point for ATP.

The protein belongs to the ABC transporter superfamily. Methionine importer (TC 3.A.1.24) family. In terms of assembly, the complex is composed of two ATP-binding proteins (MetN), two transmembrane proteins (MetI) and a solute-binding protein (MetQ).

The protein localises to the cell membrane. It catalyses the reaction L-methionine(out) + ATP + H2O = L-methionine(in) + ADP + phosphate + H(+). The catalysed reaction is D-methionine(out) + ATP + H2O = D-methionine(in) + ADP + phosphate + H(+). Part of the ABC transporter complex MetNIQ involved in methionine import. Responsible for energy coupling to the transport system. The protein is Methionine import ATP-binding protein MetN 3 of Bacillus cereus (strain ZK / E33L).